The chain runs to 177 residues: Large ribosomal subunit protein bL9 (177 aa).

The segment at 151 to 177 is disordered; the sequence is VEEEPAEEVEAPAETEVAEDAEEATEA.

It belongs to the bacterial ribosomal protein bL9 family.

In terms of biological role, binds to the 23S rRNA. In Maridesulfovibrio salexigens (strain ATCC 14822 / DSM 2638 / NCIMB 8403 / VKM B-1763) (Desulfovibrio salexigens), this protein is Large ribosomal subunit protein bL9.